The sequence spans 670 residues: Probable beta-glucosidase N (670 aa).

The first 21 residues, 1-21 (MHSNILPVLTSVATLLGLVQG), serve as a signal peptide directing secretion. An N-linked (GlcNAc...) asparagine glycan is attached at asparagine 51. Positions 65-87 (FEPSDGVRSVQGSGKDYDNPAMR) are disordered. Asparagine 141 carries an N-linked (GlcNAc...) asparagine glycan. Aspartate 152 is an active-site residue. Residues asparagine 184, asparagine 248, asparagine 330, and asparagine 417 are each glycosylated (N-linked (GlcNAc...) asparagine).

Belongs to the glycosyl hydrolase 3 family.

The protein localises to the secreted. The enzyme catalyses Hydrolysis of terminal, non-reducing beta-D-glucosyl residues with release of beta-D-glucose.. The protein operates within glycan metabolism; cellulose degradation. Beta-glucosidases are one of a number of cellulolytic enzymes involved in the degradation of cellulosic biomass. Catalyzes the last step releasing glucose from the inhibitory cellobiose. This chain is Probable beta-glucosidase N (bglN), found in Emericella nidulans (strain FGSC A4 / ATCC 38163 / CBS 112.46 / NRRL 194 / M139) (Aspergillus nidulans).